The chain runs to 586 residues: MALEIHMSDPMCLIENFNEQLKVNQEALEILSAITQPVVVVAIVGLYRTGKSYLMNKLAGKNKGFSVASTVQSHTKGIWIWCVPHPNWPNHTLVLLDTEGLGDVEKADNKNDIQIFALALLLSSTFVYNTVNKIDQGAIDLLHNVTELTDLLKARNSPDLDRVEDPADSASFFPDLVWTLRDFCLGLEIDGQLVTPDEYLENSLRPKQGSDQRVQNFNLPRLCIQKFFPKKKCFIFDLPAHQKKLAQLETLPDDELEPEFVQQVTEFCSYIFSHSMTKTLPGGIMVNGSRLKNLVLTYVNAISSGDLPCIENAVLALAQRENSAAVQKAIAHYDQQMGQKVQLPMETLQELLDLHRTSEREAIEVFMKNSFKDVDQSFQKELETLLDAKQNDICKRNLEASSDYCSALLKDIFGPLEEAVKQGIYSKPGGHNLFIQKTEELKAKYYREPRKGIQAEEVLQKYLKSKESVSHAILQTDQALTETEKKKKEAQVKAEAEKAEAQRLAAIQRQNEQMMQERERLHQEQVRQMEIAKQNWLAEQQKMQEQQMQEQAAQLSTTFQAQNRSLLSELQHAQRTVNNDDPCVLL.

The segment at Met-1–Asp-306 is NLRP3-binding. Positions Met-1–Cys-309 are GTPase domain (Globular). The GB1/RHD3-type G domain occupies Thr-35 to Met-276. Residues Gly-45–Ser-52, Val-67–Ser-69, Arg-181–Asp-182, and Leu-245 each bind GTP. The required for tetramerization, but not for dimerization stretch occupies residues Met-529 to Leu-586. Cys-583 carries the post-translational modification Cysteine methyl ester. Cys-583 carries S-geranylgeranyl cysteine lipidation. A propeptide spans Val-584 to Leu-586 (removed in mature form).

Belongs to the TRAFAC class dynamin-like GTPase superfamily. GB1/RHD3 GTPase family. GB1 subfamily. As to quaternary structure, homodimer; homodimerizes upon GTP-binding, forming a close face-to-face dimer. Heterodimer with other family members, including GBP1, GBP2, GBP3 and GBP4. May also form tetramers (dimer of dimers) in the presence of GTP. Interacts with NLRP3, possibly in its tetrameric form, and promotes PYCARD/ASC polymerization. In terms of assembly, homodimer; homodimerizes upon GTP-binding. GDP-bound form remains homodimeric. Homodimer; homodimerizes upon GTP-binding. GDP-bound is monomeric. Post-translationally, isoprenylation is required for proper subcellular location. As to expression, expressed in peripheral blood monocytes (at protein level).

The protein localises to the cytoplasmic vesicle membrane. Its subcellular location is the golgi apparatus membrane. It is found in the cytoplasm. It catalyses the reaction GTP + H2O = GDP + phosphate + H(+). Its function is as follows. Interferon (IFN)-inducible GTPase that plays important roles in innate immunity against a diverse range of bacterial, viral and protozoan pathogens. Hydrolyzes GTP, but in contrast to other family members, does not produce GMP. Following infection, recruited to the pathogen-containing vacuoles or vacuole-escaped bacteria and acts as a positive regulator of inflammasome assembly by promoting the release of inflammasome ligands from bacteria. Acts by promoting lysis of pathogen-containing vacuoles, releasing pathogens into the cytosol. Following pathogen release in the cytosol, promotes recruitment of proteins that mediate bacterial cytolysis: this liberates ligands that are detected by inflammasomes, such as lipopolysaccharide (LPS) that activates the non-canonical CASP4/CASP11 inflammasome or double-stranded DNA (dsDNA) that activates the AIM2 inflammasome. As an activator of NLRP3 inflammasome assembly: promotes selective NLRP3 inflammasome assembly in response to microbial and soluble, but not crystalline, agents. Independently of its GTPase activity, acts as an inhibitor of various viruses infectivity, such as HIV-1, Zika and influenza A viruses, by inhibiting FURIN-mediated maturation of viral envelope proteins. Functionally, antigenic tumor-specific truncated splice form. The protein is Guanylate-binding protein 5 of Homo sapiens (Human).